The primary structure comprises 211 residues: Small ribosomal subunit protein uS3 (211 aa).

One can recognise a KH type-2 domain in the interval Leu38–Arg106.

The protein belongs to the universal ribosomal protein uS3 family. As to quaternary structure, part of the 30S ribosomal subunit. Forms a tight complex with proteins S10 and S14.

Binds the lower part of the 30S subunit head. Binds mRNA in the 70S ribosome, positioning it for translation. In Geobacter sp. (strain M21), this protein is Small ribosomal subunit protein uS3.